Reading from the N-terminus, the 1105-residue chain is SWI/SNF complex subunit SMARCC1 (1105 aa).

Position 2 is an N-acetylalanine (Ala2). Positions 28–302 are marR-like, BRCT and chromo domains module; that stretch reads LAVYRRKDGG…PVSFRQRIST (275 aa). The region spanning 38 to 164 is the MarR-like domain; the sequence is PATKFWESPE…IEKTLVQNNC (127 aa). One can recognise a BRCT; N-terminus domain in the interval 168–211; it reads PNIYLIPDIDLKLANKLKDIIKRHQGTFTDEKSKASHHIYPYSS. Residue Lys179 forms a Glycyl lysine isopeptide (Lys-Gly) (interchain with G-Cter in SUMO2) linkage. Residues 217-245 form the Chromo domain; sequence EWLRPVMRKEKQVLVHWGFYPDSYDTWVH. The region spanning 261–285 is the BRCT; C-terminus domain; sequence KPWKVHVKWILDTDIFNEWMNEEDY. Residues 296–439 form a disordered region; it reads FRQRISTKNE…DQSRSVDLGE (144 aa). Residues 302-318 are compositionally biased toward basic and acidic residues; the sequence is TKNEEPVRSPERRDRKA. Ser310, Ser328, and Ser330 each carry phosphoserine. A Phosphothreonine modification is found at Thr335. Residues Lys345 and Lys346 each carry the N6-acetyllysine modification. Position 350 is a phosphoserine (Ser350). Lys354 carries the N6-acetyllysine modification. Residue Ser357 is modified to Phosphoserine. At Lys359 the chain carries N6-acetyllysine; alternate. Lys359 participates in a covalent cross-link: Glycyl lysine isopeptide (Lys-Gly) (interchain with G-Cter in SUMO2); alternate. Position 398 is a phosphothreonine (Thr398). In terms of domain architecture, SWIRM spans 449–546; that stretch reads IIIPSYASWF…YQVDPESRPM (98 aa). Position 573 is a phosphoserine (Ser573). Residue Lys592 forms a Glycyl lysine isopeptide (Lys-Gly) (interchain with G-Cter in SUMO2) linkage. In terms of domain architecture, SANT spans 618 to 669; that stretch reads SAGREWTEQETLLLLEALEMYKDDWNKVSEHVGSRTQDECILHFLRLPIEDP. Residue Lys739 forms a Glycyl lysine isopeptide (Lys-Gly) (interchain with G-Cter in SUMO2) linkage. The segment at 745 to 860 is disordered; the sequence is ARASGKVDPT…DTGKKKVEHE (116 aa). Residues 776-785 are compositionally biased toward acidic residues; it reads AEEEKMEADP. The segment covering 789 to 860 has biased composition (basic and acidic residues); sequence QPEKAENKVE…DTGKKKVEHE (72 aa). A Glycyl lysine isopeptide (Lys-Gly) (interchain with G-Cter in SUMO2) cross-link involves residue Lys796. Residues Ser822 and Ser825 each carry the phosphoserine modification. Glycyl lysine isopeptide (Lys-Gly) (interchain with G-Cter in SUMO2) cross-links involve residues Lys829 and Lys856. The stretch at 914–946 forms a coiled coil; that stretch reads FEELETIMDREKEALEQQRQQLLTERQNFHMEQ. The residue at position 948 (Lys948) is an N6-acetyllysine. 2 disordered regions span residues 956 to 1028 and 1041 to 1105; these read QQME…PGQH and IHPS…SAAP. A compositionally biased stretch (low complexity) spans 957 to 993; the sequence is QMEQQQHGQNPQQAHQHSGGPGLAPLGAAGHPGMMPH. Pro residues-rich tracts occupy residues 994–1017 and 1048–1057; these read QQPPPYPLMHHQMPPPHPPQPGQI and PTPPGMPPMP. Arg1064 is modified (asymmetric dimethylarginine). The segment covering 1073–1105 has biased composition (pro residues); the sequence is MYPPPPQQQPPPPPPADGVPPPPAPGPPASAAP.

Belongs to the SMARCC family. Component of the multiprotein chromatin-remodeling complexes SWI/SNF: SWI/SNF-A (BAF), SWI/SNF-B (PBAF) and related complexes. The canonical complex contains a catalytic subunit (either SMARCA4/BRG1/BAF190A or SMARCA2/BRM/BAF190B) and at least SMARCE1, ACTL6A/BAF53, SMARCC1/BAF155, SMARCC2/BAF170, and SMARCB1/SNF5/BAF47. Other subunits specific to each of the complexes may also be present permitting several possible combinations developmentally and tissue specific. Component of the BAF complex, which includes at least actin (ACTB), ARID1A/BAF250A, ARID1B/BAF250B, SMARCA2/BRM, SMARCA4/BRG1, ACTL6A/BAF53, ACTL6B/BAF53B, SMARCE1/BAF57, SMARCC1/BAF155, SMARCC2/BAF170, SMARCB1/SNF5/INI1, and one or more SMARCD1/BAF60A, SMARCD2/BAF60B, or SMARCD3/BAF60C. In muscle cells, the BAF complex also contains DPF3. Component of neural progenitors-specific chromatin remodeling complex (npBAF complex) composed of at least, ARID1A/BAF250A or ARID1B/BAF250B, SMARCD1/BAF60A, SMARCD3/BAF60C, SMARCA2/BRM/BAF190B, SMARCA4/BRG1/BAF190A, SMARCB1/BAF47, SMARCC1/BAF155, SMARCE1/BAF57, SMARCC2/BAF170, PHF10/BAF45A, ACTL6A/BAF53A and actin. Component of neuron-specific chromatin remodeling complex (nBAF complex) composed of at least, ARID1A/BAF250A or ARID1B/BAF250B, SMARCD1/BAF60A, SMARCD3/BAF60C, SMARCA2/BRM/BAF190B, SMARCA4/BRG1/BAF190A, SMARCB1/BAF47, SMARCC1/BAF155, SMARCE1/BAF57, SMARCC2/BAF170, DPF1/BAF45B, DPF3/BAF45C, ACTL6B/BAF53B and actin. Component of the SWI/SNF-B (PBAF) chromatin remodeling complex, at least composed of SMARCA4/BRG1, SMARCB1/BAF47/SNF5, ACTL6A/BAF53A or ACTL6B/BAF53B, SMARCE1/BAF57, SMARCD1/BAF60A, SMARCD2/BAF60B, perhaps SMARCD3/BAF60C, SMARCC1/BAF155, SMARCC2/BAF170, PBRM1/BAF180, ARID2/BAF200 and actin. Component of SWI/SNF (GBAF) subcomplex, which includes at least BICRA or BICRAL (mutually exclusive), BRD9, SS18, SMARCA2/BRM, SMARCA4/BRG1/BAF190A, ACTL6A/BAF53, SMARCC1/BAF155, and SMARCD1/BAF60A. May also interact with the SIN3A histone deacetylase transcription repressor complex in conjunction with SMARCA2 and SMARCA4. The minimal complex composed of SMARCC1 and SMARCA4 seems to be able to associate with cyclin such as CCNE1 or transcription factors such as KLF1 or GATA1. Interacts with NR3C1 and SMARD1. Interacts with TRIP12; leading to disrupt interaction between TRIP12 and SMARCE1 and prevent SMARCE1 ubiquitination. Interacts with CEBPB (when not methylated). Interacts with KDM6B. Interacts with MKKS; the interaction takes place predominantly in the cytoplasm and may modulate SMARCC1 location. Interacts with DPF2. Interacts with PRDM1/BLIMP1. Interacts with DPF3a (isoform 2 of DPF3/BAF45C) and with HDGFL2 in a DPF3a-dependent manner. Phosphorylated on undefined residues at the G2/M transition by ERK1 and other kinases. This may contribute to cell cycle specific inactivation of remodeling complexes containing the phosphorylated protein. As to expression, expressed in brain, heart, muscle, placenta, lung, liver, muscle, kidney and pancreas.

The protein resides in the nucleus. It is found in the cytoplasm. Its function is as follows. Involved in transcriptional activation and repression of select genes by chromatin remodeling (alteration of DNA-nucleosome topology). Component of SWI/SNF chromatin remodeling complexes that carry out key enzymatic activities, changing chromatin structure by altering DNA-histone contacts within a nucleosome in an ATP-dependent manner. May stimulate the ATPase activity of the catalytic subunit of the complex. Belongs to the neural progenitors-specific chromatin remodeling complex (npBAF complex) and the neuron-specific chromatin remodeling complex (nBAF complex). During neural development a switch from a stem/progenitor to a postmitotic chromatin remodeling mechanism occurs as neurons exit the cell cycle and become committed to their adult state. The transition from proliferating neural stem/progenitor cells to postmitotic neurons requires a switch in subunit composition of the npBAF and nBAF complexes. As neural progenitors exit mitosis and differentiate into neurons, npBAF complexes which contain ACTL6A/BAF53A and PHF10/BAF45A, are exchanged for homologous alternative ACTL6B/BAF53B and DPF1/BAF45B or DPF3/BAF45C subunits in neuron-specific complexes (nBAF). The npBAF complex is essential for the self-renewal/proliferative capacity of the multipotent neural stem cells. The nBAF complex along with CREST plays a role regulating the activity of genes essential for dendrite growth. The protein is SWI/SNF complex subunit SMARCC1 of Homo sapiens (Human).